A 501-amino-acid chain; its full sequence is Pyruvate kinase (501 aa).

Arg-50 lines the substrate pocket. K(+)-binding residues include Asn-52, Ser-54, Asp-85, and Thr-86. Residue 52–55 (NFSH) participates in ATP binding. ATP is bound by residues Arg-92 and Lys-178. Glu-243 contributes to the Mg(2+) binding site. Residues Gly-266, Asp-267, and Thr-299 each contribute to the substrate site. Asp-267 contacts Mg(2+).

The protein belongs to the pyruvate kinase family. In terms of assembly, homotetramer. Requires Mg(2+) as cofactor. It depends on K(+) as a cofactor.

It catalyses the reaction pyruvate + ATP = phosphoenolpyruvate + ADP + H(+). The protein operates within carbohydrate degradation; glycolysis; pyruvate from D-glyceraldehyde 3-phosphate: step 5/5. This is Pyruvate kinase (PYK1) from Kluyveromyces lactis (strain ATCC 8585 / CBS 2359 / DSM 70799 / NBRC 1267 / NRRL Y-1140 / WM37) (Yeast).